We begin with the raw amino-acid sequence, 522 residues long: Na(+)/H(+) antiporter NhaB (522 aa).

11 consecutive transmembrane segments (helical) span residues 25–45, 49–69, 87–107, 128–162, 201–221, 237–257, 302–322, 356–376, 388–408, 446–466, and 476–496; these read VFLV…GWLL, FIFT…GMLA, ILAN…IYFM, LSLA…FYGV, LMMH…VGEP, FFFR…VTCI, VFVG…VGLI, LVVF…APVI, LLLF…VFVA, ATPN…SPLI, and MALP…EYVL.

The protein belongs to the NhaB Na(+)/H(+) (TC 2.A.34) antiporter family.

It localises to the cell inner membrane. It catalyses the reaction 2 Na(+)(in) + 3 H(+)(out) = 2 Na(+)(out) + 3 H(+)(in). Functionally, na(+)/H(+) antiporter that extrudes sodium in exchange for external protons. This is Na(+)/H(+) antiporter NhaB from Actinobacillus succinogenes (strain ATCC 55618 / DSM 22257 / CCUG 43843 / 130Z).